The following is an 80-amino-acid chain: Serine palmitoyltransferase small subunit A-B (80 aa).

The Cytoplasmic segment spans residues 1–21 (MKVSCEDVNGPRSSLGRAWNH). A helical transmembrane segment spans residues 22–38 (VSWLYYQYLLVTALYML). The Lumenal segment spans residues 39-43 (EPWER). The helical transmembrane segment at 44–66 (TVFNSMLVSIVGMALYTGYIFMP) threads the bilayer. The Cytoplasmic portion of the chain corresponds to 67-80 (QHILAILHYFEIVQ).

It belongs to the SPTSS family. SPTSSA subfamily. In terms of assembly, component of the serine palmitoyltransferase (SPT) complex, which is composed of SPTLC1, SPTLC2 or SPTLC3 and SPTSSA or SPTSSB. The heterodimer consisting of SPTLC1 and SPTLC2/SPTLC3 forms the catalytic core of the enzyme, while SPTSSA or SPTSSB subunits determine substrate specificity. SPT also interacts with ORMDL proteins, especially ORMDL3, which negatively regulate SPT activity in the presence of ceramides.

It is found in the endoplasmic reticulum membrane. It participates in lipid metabolism; sphingolipid metabolism. In terms of biological role, component of the serine palmitoyltransferase multisubunit enzyme (SPT) that catalyzes the initial and rate-limiting step in sphingolipid biosynthesis by condensing L-serine and activated acyl-CoA (most commonly palmitoyl-CoA) to form long-chain bases. The SPT complex is composed of SPTLC1, SPTLC2 or SPTLC3 and SPTSSA or SPTSSB. Within this complex, the heterodimer consisting of SPTLC1 and SPTLC2/SPTLC3 forms the catalytic core. Within the SPT complex, SPTSSA stimulates the catalytic activity and plays a role in substrate specificity, which depends upon the overall complex composition. The SPTLC1-SPTLC2-SPTSSA complex shows a strong preference for C16-CoA substrate, while the SPTLC1-SPTLC3-SPTSSA isozyme uses both C14-CoA and C16-CoA as substrates, with a slight preference for C14-CoA. Independently of its action as a SPT component, may be involved in MBOAT7 localization to mitochondria-associated membranes, a membrane bridge between the endoplasmic reticulum and mitochondria, may hence affect MBOAT7-catalyzed incorporation of arachidonic acid into phosphatidylinositol. The sequence is that of Serine palmitoyltransferase small subunit A-B (sptssa-b) from Xenopus laevis (African clawed frog).